Consider the following 336-residue polypeptide: 3-isopropylmalate dehydrogenase (336 aa).

Residues R87, R97, R121, and D211 each contribute to the substrate site. Positions 211, 235, and 239 each coordinate Mg(2+). Position 271–283 (271–283 (GSAPDIAGQGIAD)) interacts with NAD(+).

Belongs to the isocitrate and isopropylmalate dehydrogenases family. LeuB type 2 subfamily. Homodimer. It depends on Mg(2+) as a cofactor. Requires Mn(2+) as cofactor.

The protein localises to the cytoplasm. The enzyme catalyses (2R,3S)-3-isopropylmalate + NAD(+) = 4-methyl-2-oxopentanoate + CO2 + NADH. It functions in the pathway amino-acid biosynthesis; L-leucine biosynthesis; L-leucine from 3-methyl-2-oxobutanoate: step 3/4. Catalyzes the oxidation of 3-carboxy-2-hydroxy-4-methylpentanoate (3-isopropylmalate) to 3-carboxy-4-methyl-2-oxopentanoate. The product decarboxylates to 4-methyl-2 oxopentanoate. The sequence is that of 3-isopropylmalate dehydrogenase from Mycolicibacterium gilvum (strain PYR-GCK) (Mycobacterium gilvum (strain PYR-GCK)).